Consider the following 228-residue polypeptide: Cytochrome c oxidase subunit 2 (228 aa).

The Mitochondrial intermembrane portion of the chain corresponds to 1-26 (MATWANLGLQDSSSPLMEQLNFFHDH). The chain crosses the membrane as a helical span at residues 27–48 (TLLILTMITILVGYIMGMLSFN). Over 49–62 (KFTNRFLLHGQTIE) the chain is Mitochondrial matrix. The helical transmembrane segment at 63-82 (IIWTVLPAIILMFIAFPSLR) threads the bilayer. Residues 83–228 (LLYLMDEINT…FIKWITSMTN (146 aa)) lie on the Mitochondrial intermembrane side of the membrane. Cu cation-binding residues include His161, Cys196, Glu198, Cys200, His204, and Met207. Residue Glu198 coordinates Mg(2+).

The protein belongs to the cytochrome c oxidase subunit 2 family. Component of the cytochrome c oxidase (complex IV, CIV), a multisubunit enzyme composed of a catalytic core of 3 subunits and several supernumerary subunits. The complex exists as a monomer or a dimer and forms supercomplexes (SCs) in the inner mitochondrial membrane with ubiquinol-cytochrome c oxidoreductase (cytochrome b-c1 complex, complex III, CIII). It depends on Cu cation as a cofactor.

It is found in the mitochondrion inner membrane. It catalyses the reaction 4 Fe(II)-[cytochrome c] + O2 + 8 H(+)(in) = 4 Fe(III)-[cytochrome c] + 2 H2O + 4 H(+)(out). Component of the cytochrome c oxidase, the last enzyme in the mitochondrial electron transport chain which drives oxidative phosphorylation. The respiratory chain contains 3 multisubunit complexes succinate dehydrogenase (complex II, CII), ubiquinol-cytochrome c oxidoreductase (cytochrome b-c1 complex, complex III, CIII) and cytochrome c oxidase (complex IV, CIV), that cooperate to transfer electrons derived from NADH and succinate to molecular oxygen, creating an electrochemical gradient over the inner membrane that drives transmembrane transport and the ATP synthase. Cytochrome c oxidase is the component of the respiratory chain that catalyzes the reduction of oxygen to water. Electrons originating from reduced cytochrome c in the intermembrane space (IMS) are transferred via the dinuclear copper A center (CU(A)) of subunit 2 and heme A of subunit 1 to the active site in subunit 1, a binuclear center (BNC) formed by heme A3 and copper B (CU(B)). The BNC reduces molecular oxygen to 2 water molecules using 4 electrons from cytochrome c in the IMS and 4 protons from the mitochondrial matrix. This is Cytochrome c oxidase subunit 2 (COII) from Anopheles gambiae (African malaria mosquito).